The following is a 360-amino-acid chain: Peptide chain release factor 1 (360 aa).

Position 235 is an N5-methylglutamine (Q235). Positions 285–313 (KRQQAEASTRRNLLGSGDRSDRNRTYNFP) are disordered.

Belongs to the prokaryotic/mitochondrial release factor family. Methylated by PrmC. Methylation increases the termination efficiency of RF1.

It is found in the cytoplasm. Peptide chain release factor 1 directs the termination of translation in response to the peptide chain termination codons UAG and UAA. This chain is Peptide chain release factor 1, found in Salmonella paratyphi A (strain ATCC 9150 / SARB42).